The sequence spans 594 residues: MKNIRNFSIIAHIDHGKSTLSDRFIQVCNGLSEREMKEQVLDSMDIERERGITIKAQSVTLDYTARDGQTYQLNFIDTPGHVDFSYEVSRSLAACEGALLVVDAAQGVEAQTVANCYTAIEQNLEVIPILNKIDLPSAEPDRVAQEIEEIIGIDATGATTCSAKIGIGVEDVLETIVAKVPAPEGDVNAKLQALIIDSWFDNYLGVVSLVRVKNGTIKKGEKFKVMSTGVAYQVDRLGVFTPKMKDLDHLKAGEVGFIVAGIKDIHGAPVGDTLTHAHNPTDKPVPGFKKVQPQVYAGMFTISSDDYPDFREALEKLSLNDASLFFEPEVSQALGFGFRCGFLGMLHMEIIQERLEREYNLDLITSAPTVVYKAIKKDGEIIEVDNLSKLPEPGAIAEIQEPIVRANILVPKDYVGSVITICIEKRGVQVDLNYVGNQVSITYDLPMIEVVSDFFDTLKSVTKGYGSLDYELIRYEPANMVCLDVLINGDKVDALASIVHKDQAKYKGRELVERLKELIPRQMFEVAIQAAIGGTIVARSTVKALRKNVLAKCYGGDVSRKKKLLEKQKEGKKRMKNIGSVEIPQEAFLSVLKK.

A tr-type G domain is found at 2-184 (KNIRNFSIIA…TIVAKVPAPE (183 aa)). Residues 14 to 19 (DHGKST) and 131 to 134 (NKID) each bind GTP.

The protein belongs to the TRAFAC class translation factor GTPase superfamily. Classic translation factor GTPase family. LepA subfamily.

It localises to the cell inner membrane. The enzyme catalyses GTP + H2O = GDP + phosphate + H(+). Functionally, required for accurate and efficient protein synthesis under certain stress conditions. May act as a fidelity factor of the translation reaction, by catalyzing a one-codon backward translocation of tRNAs on improperly translocated ribosomes. Back-translocation proceeds from a post-translocation (POST) complex to a pre-translocation (PRE) complex, thus giving elongation factor G a second chance to translocate the tRNAs correctly. Binds to ribosomes in a GTP-dependent manner. This is Elongation factor 4 from Francisella tularensis subsp. tularensis (strain FSC 198).